A 314-amino-acid chain; its full sequence is Malate dehydrogenase (314 aa).

Residues 11-16 (GSGNIG) and Asp-35 contribute to the NAD(+) site. Residues Arg-84 and Arg-90 each contribute to the substrate site. Residues Asn-97 and 120 to 122 (ITN) each bind NAD(+). Substrate-binding residues include Asn-122 and Arg-153. Residue His-177 is the Proton acceptor of the active site.

It belongs to the LDH/MDH superfamily. MDH type 3 family.

It catalyses the reaction (S)-malate + NAD(+) = oxaloacetate + NADH + H(+). Its function is as follows. Catalyzes the reversible oxidation of malate to oxaloacetate. The protein is Malate dehydrogenase of Rickettsia canadensis (strain McKiel).